Reading from the N-terminus, the 280-residue chain is Bifunctional protein FolD (280 aa).

NADP(+) contacts are provided by residues 159-161 (GRS), serine 184, and isoleucine 225.

Belongs to the tetrahydrofolate dehydrogenase/cyclohydrolase family. As to quaternary structure, homodimer.

The catalysed reaction is (6R)-5,10-methylene-5,6,7,8-tetrahydrofolate + NADP(+) = (6R)-5,10-methenyltetrahydrofolate + NADPH. It catalyses the reaction (6R)-5,10-methenyltetrahydrofolate + H2O = (6R)-10-formyltetrahydrofolate + H(+). It functions in the pathway one-carbon metabolism; tetrahydrofolate interconversion. Its function is as follows. Catalyzes the oxidation of 5,10-methylenetetrahydrofolate to 5,10-methenyltetrahydrofolate and then the hydrolysis of 5,10-methenyltetrahydrofolate to 10-formyltetrahydrofolate. The chain is Bifunctional protein FolD from Methanosphaerula palustris (strain ATCC BAA-1556 / DSM 19958 / E1-9c).